We begin with the raw amino-acid sequence, 277 residues long: MKQSFSRPHFENQELDSLKIGEKIFNSRLMVGTGKYNNLKEAIKSIDYSGANIVTVAIRRAQNSKNLGRSNLLDGLDWSKLWILPNTAGCESAEEAVRIAALGREIVKKLGQTDNNFIKLEVIPDSHYLFPDPIGTLKAAEYLVKKGFIVMPYIGADPVLAKQLENIGCATVMPLASPIGSGQGLKNLLNLKIIIENSNIPVIIDAGIGTPSEAAKVMEMGASGVLVNTAIARAPNSPQMAKAMSLAVKSGRLTHTAGRMIINQTANPSSPIFGISK.

Lysine 119 acts as the Schiff-base intermediate with DXP in catalysis. 1-deoxy-D-xylulose 5-phosphate contacts are provided by residues glycine 180, 206 to 207 (AG), and 228 to 229 (NT).

It belongs to the ThiG family. In terms of assembly, homotetramer. Forms heterodimers with either ThiH or ThiS.

The protein localises to the plastid. It is found in the chloroplast. It carries out the reaction [ThiS sulfur-carrier protein]-C-terminal-Gly-aminoethanethioate + 2-iminoacetate + 1-deoxy-D-xylulose 5-phosphate = [ThiS sulfur-carrier protein]-C-terminal Gly-Gly + 2-[(2R,5Z)-2-carboxy-4-methylthiazol-5(2H)-ylidene]ethyl phosphate + 2 H2O + H(+). It functions in the pathway cofactor biosynthesis; thiamine diphosphate biosynthesis. In terms of biological role, catalyzes the rearrangement of 1-deoxy-D-xylulose 5-phosphate (DXP) to produce the thiazole phosphate moiety of thiamine. Sulfur is provided by the thiocarboxylate moiety of the carrier protein ThiS. In vitro, sulfur can be provided by H(2)S. This is Thiazole synthase from Pyropia yezoensis (Susabi-nori).